The chain runs to 320 residues: Malate dehydrogenase (320 aa).

Residues 8–13 (GAGQIG) and Asp33 contribute to the NAD(+) site. Positions 82 and 88 each coordinate substrate. NAD(+) is bound by residues Asn95 and 118 to 120 (ITN). Substrate is bound by residues Asn120 and Arg151. Residue His175 is the Proton acceptor of the active site.

The protein belongs to the LDH/MDH superfamily. MDH type 3 family.

The catalysed reaction is (S)-malate + NAD(+) = oxaloacetate + NADH + H(+). Its function is as follows. Catalyzes the reversible oxidation of malate to oxaloacetate. The polypeptide is Malate dehydrogenase (Pelagibacter ubique (strain HTCC1062)).